The following is a 408-amino-acid chain: Probable serine/threonine-protein kinase PBL16 (408 aa).

A lipid anchor (N-myristoyl glycine) is attached at Gly-2. Cys-4 carries the S-palmitoyl cysteine lipid modification. The disordered stretch occupies residues 17–50 (ANAKSESPKEQSPTVEDKHIKEVQKLPSNPKEVE). Over residues 18–30 (NAKSESPKEQSPT) the composition is skewed to polar residues. Basic and acidic residues predominate over residues 31–40 (VEDKHIKEVQ). Thr-65 is modified (phosphothreonine). The region spanning 76-360 (FRQDRVLGGG…DIVDSLEPLQ (285 aa)) is the Protein kinase domain. ATP-binding positions include 82 to 90 (LGGGGFGSV) and Lys-113. Tyr-159 carries the post-translational modification Phosphotyrosine. Asp-209 acts as the Proton acceptor in catalysis. Residues Ser-213 and Ser-243 each carry the phosphoserine modification. Phosphothreonine occurs at positions 244 and 249. A Phosphotyrosine modification is found at Tyr-257.

It belongs to the protein kinase superfamily. Ser/Thr protein kinase family. In terms of processing, palmitoylation at Cys-4 and Cys-6 are required for plasma membrane location.

Its subcellular location is the cell membrane. The catalysed reaction is L-seryl-[protein] + ATP = O-phospho-L-seryl-[protein] + ADP + H(+). The enzyme catalyses L-threonyl-[protein] + ATP = O-phospho-L-threonyl-[protein] + ADP + H(+). Functionally, may be involved in plant defense signaling. The polypeptide is Probable serine/threonine-protein kinase PBL16 (Arabidopsis thaliana (Mouse-ear cress)).